We begin with the raw amino-acid sequence, 49 residues long: Large ribosomal subunit protein bL33B (49 aa).

Belongs to the bacterial ribosomal protein bL33 family.

The sequence is that of Large ribosomal subunit protein bL33B from Lactobacillus gasseri (strain ATCC 33323 / DSM 20243 / BCRC 14619 / CIP 102991 / JCM 1131 / KCTC 3163 / NCIMB 11718 / NCTC 13722 / AM63).